Consider the following 266-residue polypeptide: 3-deoxy-manno-octulosonate cytidylyltransferase 1 (266 aa).

Belongs to the KdsB family.

It localises to the cytoplasm. It carries out the reaction 3-deoxy-alpha-D-manno-oct-2-ulosonate + CTP = CMP-3-deoxy-beta-D-manno-octulosonate + diphosphate. It functions in the pathway nucleotide-sugar biosynthesis; CMP-3-deoxy-D-manno-octulosonate biosynthesis; CMP-3-deoxy-D-manno-octulosonate from 3-deoxy-D-manno-octulosonate and CTP: step 1/1. It participates in bacterial outer membrane biogenesis; lipopolysaccharide biosynthesis. Its function is as follows. Activates KDO (a required 8-carbon sugar) for incorporation into bacterial lipopolysaccharide in Gram-negative bacteria. This Paraburkholderia phytofirmans (strain DSM 17436 / LMG 22146 / PsJN) (Burkholderia phytofirmans) protein is 3-deoxy-manno-octulosonate cytidylyltransferase 1.